A 1296-amino-acid polypeptide reads, in one-letter code: Probable serine/threonine protein kinase IREH1 (1296 aa).

Disordered regions lie at residues 1 to 274, 457 to 480, and 524 to 553; these read MVFK…SESP, SGAG…QEQH, and SPAL…VGSR. Residues 10-32 show a composition bias toward low complexity; that stretch reads SSKKSGSSSPDSSNSPRSVGSNS. Position 32 is a phosphoserine (Ser-32). Composition is skewed to basic and acidic residues over residues 68 to 77, 101 to 112, and 178 to 208; these read DGLKKKDGSS, EVKKPPPPEVKE, and RKKE…RDSL. Low complexity predominate over residues 214-249; that stretch reads PPRSLSPTLPPSGSRLQNVASSSGTGRSEMSSGRSG. The segment at 602–621 adopts a C2H2-type; atypical zinc-finger fold; that stretch reads CRICEEEVPTTHVEDHSRVC. A disordered region spans residues 724-750; sequence FGPKSDQGMTTSSASSMTPRSPIPTPR. The span at 730-740 shows a compositional bias: polar residues; the sequence is QGMTTSSASSM. One can recognise a Protein kinase domain in the interval 882 to 1171; it reads FEIIKPISRG…AAEVKQHIFF (290 aa). Residues 888-896 and Lys-911 contribute to the ATP site; that span reads ISRGAFGRV. Asp-1005 functions as the Proton acceptor in the catalytic mechanism. A Phosphoserine modification is found at Ser-1070. Residues 1172 to 1277 enclose the AGC-kinase C-terminal domain; sequence KDINWDTLAR…KNLSQLASIN (106 aa). A disordered region spans residues 1214–1245; sequence PSGEVPDYSDADSMTNSSGCSSNHHEEGEAEE. The segment covering 1225 to 1235 has biased composition (polar residues); the sequence is DSMTNSSGCSS. A compositionally biased stretch (basic and acidic residues) spans 1236–1245; it reads NHHEEGEAEE.

This sequence belongs to the protein kinase superfamily. AGC Ser/Thr protein kinase family.

It carries out the reaction L-seryl-[protein] + ATP = O-phospho-L-seryl-[protein] + ADP + H(+). The enzyme catalyses L-threonyl-[protein] + ATP = O-phospho-L-threonyl-[protein] + ADP + H(+). Functionally, may be involved in root hair elongation. This is Probable serine/threonine protein kinase IREH1 from Arabidopsis thaliana (Mouse-ear cress).